Reading from the N-terminus, the 161-residue chain is Regulator of ribonuclease activity A (161 aa).

This sequence belongs to the RraA family. As to quaternary structure, homotrimer. Binds to both RNA-binding sites in the C-terminal region of Rne and to RhlB.

It localises to the cytoplasm. In terms of biological role, globally modulates RNA abundance by binding to RNase E (Rne) and regulating its endonucleolytic activity. Can modulate Rne action in a substrate-dependent manner by altering the composition of the degradosome. Modulates RNA-binding and helicase activities of the degradosome. This is Regulator of ribonuclease activity A from Klebsiella pneumoniae (strain 342).